The following is a 983-amino-acid chain: MEMKLPGQEGFEASSAPRNIPSGELDSNPDPGTGPSPDGPSDTESKELGVPKDPLLFIQLNELLGWPQALEWRETGSSSASLLLDMGEMPSITLSTHLHHRWVLFEEKLEVAAGRWSAPHVPTLALPSLQKLRSLLAEGLVLLDCPAQSLLELVEQVTRVESLSPELRGQLQALLLQRPQHYNQTTGTRPCWGSTHPRKASDNEEAPLREQCQNPLRQKLPPGAEAGTVLAGELGFLAQPLGAFVRLRNPVVLGSLTEVSLPSRFFCLLLGPCMLGKGYHEMGRAAAVLLSDPQFQWSVRRASNLHDLLAALDAFLEEVTVLPPGRWDPTARIPPPKCLPSQHKRLPSQQREIRGPAVPRLTSAEDRHRHGPHAHSPELQRTGRLFGGLIQDVRRKVPWYPSDFLDALHLQCFSAVLYIYLATVTNAITFGGLLGDATDGAQGVLESFLGTAVAGAAFCLMAGQPLTILSSTGPVLVFERLLFSFSRDYSLDYLPFRLWVGIWVATFCLVLVATEASVLVRYFTRFTEEGFCALISLIFIYDAVGKMLNLTHTYPIQKPGSSAYGCLCQYPGPGGNESQWIRTRPKDRDDIVSMDLGLINASLLPPPECTRQGGHPRGPGCHTVPDIAFFSLLLFLTSFFFAMALKCVKTSRFFPSVVRKGLSDFSSVLAILLGCGLDAFLGLATPKLMVPREFKPTLPGRGWLVSPFGANPWWWSVAAALPALLLSILIFMDQQITAVILNRMEYRLQKGAGFHLDLFCVAVLMLLTSALGLPWYVSATVISLAHMDSLRRESRACAPGERPNFLGIREQRLTGLVVFILTGASIFLAPVLKFIPMPVLYGIFLYMGVAALSSIQFTNRVKLLLMPAKHQPDLLLLRHVPLTRVHLFTAIQLACLGLLWIIKSTPAAIIFPLMLLGLVGVRKALERVFSPQELLWLDELMPEEERSIPEKGLEPEHSFSGSDSEDSELMYQPKAPEINISVN.

Residues 1 to 48 (MEMKLPGQEGFEASSAPRNIPSGELDSNPDPGTGPSPDGPSDTESKEL) form a disordered region. Residue N183 is glycosylated (N-linked (GlcNAc...) asparagine). 2 disordered regions span residues 186 to 205 (TGTR…DNEE) and 332 to 357 (RIPP…RGPA). The next 4 membrane-spanning stretches (helical) occupy residues 415–435 (AVLY…GLLG), 443–463 (GVLE…LMAG), 500–520 (VGIW…SVLV), and 530–550 (GFCA…MLNL). Residues 415–983 (AVLYIYLATV…KAPEINISVN (569 aa)) form a membrane (anion exchange) region. 2 N-linked (GlcNAc...) asparagine glycosylation sites follow: N576 and N600. Helical transmembrane passes span 624-644 (VPDI…FAMA), 665-685 (FSSV…GLAT), 712-732 (PWWW…LIFM), 758-778 (LFCV…WYVS), 815-835 (GLVV…LKFI), 837-857 (MPVL…SIQF), and 899-919 (LWII…LGLV). Positions 946–957 (RSIPEKGLEPEH) are enriched in basic and acidic residues. Positions 946–983 (RSIPEKGLEPEHSFSGSDSEDSELMYQPKAPEINISVN) are disordered. N979 carries an N-linked (GlcNAc...) asparagine glycan.

Belongs to the anion exchanger (TC 2.A.31) family. Kidney specific.

The protein localises to the basolateral cell membrane. The catalysed reaction is 2 hydrogencarbonate(out) + chloride(in) + Na(+)(out) = 2 hydrogencarbonate(in) + chloride(out) + Na(+)(in). It carries out the reaction K(+)(in) + 2 hydrogencarbonate(in) + chloride(out) = K(+)(out) + 2 hydrogencarbonate(out) + chloride(in). It catalyses the reaction Li(+)(in) + 2 hydrogencarbonate(in) + chloride(out) = Li(+)(out) + 2 hydrogencarbonate(out) + chloride(in). The enzyme catalyses Rb(+)(in) + 2 hydrogencarbonate(in) + chloride(out) = Rb(+)(out) + 2 hydrogencarbonate(out) + chloride(in). The catalysed reaction is Cs(+)(in) + 2 hydrogencarbonate(in) + chloride(out) = Cs(+)(out) + 2 hydrogencarbonate(out) + chloride(in). Its function is as follows. Electroneutral Cl(-)/HCO3(-) antiporter that favors chloride ion entry and efflux of hydrogencarbonate and sodium ion across the basolateral membrane and may participate in salivary secretion. Also mediates Cl(-)/HCO3(-) exchange activity in the presence of K(+) as well as Cs(+), Li(+), and Rb(+). Does not contribute to Cl(-)/HCO3(-) exchanger in the apical membrane of the upper villous epithelium. In Homo sapiens (Human), this protein is Anion exchange protein 4.